Here is a 181-residue protein sequence, read N- to C-terminus: Large ribosomal subunit protein uL6 (181 aa).

The protein belongs to the universal ribosomal protein uL6 family. As to quaternary structure, part of the 50S ribosomal subunit.

Functionally, this protein binds to the 23S rRNA, and is important in its secondary structure. It is located near the subunit interface in the base of the L7/L12 stalk, and near the tRNA binding site of the peptidyltransferase center. This chain is Large ribosomal subunit protein uL6, found in Synechococcus sp. (strain JA-2-3B'a(2-13)) (Cyanobacteria bacterium Yellowstone B-Prime).